Here is a 153-residue protein sequence, read N- to C-terminus: Zinc finger protein GIS2 (153 aa).

7 consecutive CCHC-type zinc fingers follow at residues 4-21 (KACY…DCDS), 23-40 (RLCY…DCTM), 47-64 (KQCY…ECTV), 65-82 (QRCF…ECPE), 92-109 (VSCY…DCMK), 116-133 (LKCY…DCQN), and 135-152 (RLCY…DCPK).

The protein localises to the cytoplasm. May act in the sexual differentiation pathway. In Saccharomyces cerevisiae (strain ATCC 204508 / S288c) (Baker's yeast), this protein is Zinc finger protein GIS2 (GIS2).